A 186-amino-acid chain; its full sequence is Holliday junction branch migration complex subunit RuvA (186 aa).

The segment at 1–63 (MNDYINGFLY…DNHFKYYGFF (63 aa)) is domain I. Residues 64–137 (NQLVRDLFEI…QKELFNNKIS (74 aa)) form a domain II region. Position 137 (Ser-137) is a region of interest, flexible linker. The segment at 137 to 186 (SEKKNKVITSLEKLGYKTKDIYKIIINVDEDLTIDELTKYVLEKLSYINN) is domain III.

The protein belongs to the RuvA family. Homotetramer. Forms an RuvA(8)-RuvB(12)-Holliday junction (HJ) complex. HJ DNA is sandwiched between 2 RuvA tetramers; dsDNA enters through RuvA and exits via RuvB. An RuvB hexamer assembles on each DNA strand where it exits the tetramer. Each RuvB hexamer is contacted by two RuvA subunits (via domain III) on 2 adjacent RuvB subunits; this complex drives branch migration. In the full resolvosome a probable DNA-RuvA(4)-RuvB(12)-RuvC(2) complex forms which resolves the HJ.

Its subcellular location is the cytoplasm. In terms of biological role, the RuvA-RuvB-RuvC complex processes Holliday junction (HJ) DNA during genetic recombination and DNA repair, while the RuvA-RuvB complex plays an important role in the rescue of blocked DNA replication forks via replication fork reversal (RFR). RuvA specifically binds to HJ cruciform DNA, conferring on it an open structure. The RuvB hexamer acts as an ATP-dependent pump, pulling dsDNA into and through the RuvAB complex. HJ branch migration allows RuvC to scan DNA until it finds its consensus sequence, where it cleaves and resolves the cruciform DNA. This is Holliday junction branch migration complex subunit RuvA from Mycoplasma capricolum subsp. capricolum (strain California kid / ATCC 27343 / NCTC 10154).